A 393-amino-acid polypeptide reads, in one-letter code: E3 ubiquitin-protein transferase RMND5B (393 aa).

An N-acetylmethionine modification is found at M1. One can recognise a LisH domain in the interval 116 to 148 (QQQILQMAIVEHLYQQGMLSVAEELCQESTLNV). The region spanning 155 to 212 (PFLELNRILEALHEQDLGPALEWAVSHRQRLLELNSSLEFKLHRLHFIRLLAGGPAKQ) is the CTLH domain. An RING-Gid-type zinc finger spans residues 338–379 (CPILRQQTSDSNPPIKLICGHVISRDALNKLINGGKLKCPYC).

Identified in the CTLH complex that contains GID4, RANBP9 and/or RANBP10, MKLN1, MAEA, RMND5A (or alternatively its paralog RMND5B), GID8, ARMC8, WDR26 and YPEL5. Within this complex, MAEA, RMND5A (or alternatively its paralog RMND5B), GID8, WDR26, and RANBP9 and/or RANBP10 form the catalytic core, while GID4, MKLN1, ARMC8 and YPEL5 have ancillary roles.

Its subcellular location is the cytoplasm. It localises to the cytosol. It catalyses the reaction S-ubiquitinyl-[E2 ubiquitin-conjugating enzyme]-L-cysteine + [acceptor protein]-L-lysine = [E2 ubiquitin-conjugating enzyme]-L-cysteine + N(6)-ubiquitinyl-[acceptor protein]-L-lysine.. Core component of the CTLH E3 ubiquitin-protein ligase complex that selectively accepts ubiquitin from UBE2H and mediates ubiquitination and subsequent proteasomal degradation of the transcription factor HBP1. MAEA and RMND5A are both required for catalytic activity of the CTLH E3 ubiquitin-protein ligase complex. Catalytic activity of the complex is required for normal cell proliferation. The CTLH E3 ubiquitin-protein ligase complex is not required for the degradation of enzymes involved in gluconeogenesis, such as FBP1. In Homo sapiens (Human), this protein is E3 ubiquitin-protein transferase RMND5B (RMND5B).